We begin with the raw amino-acid sequence, 459 residues long: ATP-dependent protease ATPase subunit HslU (459 aa).

Residues V18, 60–65, D272, E337, and R409 each bind ATP; that span reads GVGKTE.

Belongs to the ClpX chaperone family. HslU subfamily. A double ring-shaped homohexamer of HslV is capped on each side by a ring-shaped HslU homohexamer. The assembly of the HslU/HslV complex is dependent on binding of ATP.

The protein localises to the cytoplasm. Functionally, ATPase subunit of a proteasome-like degradation complex; this subunit has chaperone activity. The binding of ATP and its subsequent hydrolysis by HslU are essential for unfolding of protein substrates subsequently hydrolyzed by HslV. HslU recognizes the N-terminal part of its protein substrates and unfolds these before they are guided to HslV for hydrolysis. The sequence is that of ATP-dependent protease ATPase subunit HslU from Thermoanaerobacter sp. (strain X514).